The sequence spans 769 residues: Amino-acid acetyltransferase, mitochondrial (769 aa).

The tract at residues 150-172 (LKASPAKSGQEPTESPKESISAS) is disordered. Polar residues predominate over residues 159–172 (QEPTESPKESISAS). Residues 590 to 759 (MQPRLGLNDP…YEAVCRSIQP (170 aa)) form the N-acetyltransferase domain.

This sequence belongs to the acetyltransferase family.

The protein localises to the mitochondrion. It carries out the reaction L-glutamate + acetyl-CoA = N-acetyl-L-glutamate + CoA + H(+). It functions in the pathway amino-acid biosynthesis; L-arginine biosynthesis; N(2)-acetyl-L-ornithine from L-glutamate: step 1/4. N-acetylglutamate synthase involved in arginine biosynthesis. This is Amino-acid acetyltransferase, mitochondrial (arg2) from Penicillium rubens (strain ATCC 28089 / DSM 1075 / NRRL 1951 / Wisconsin 54-1255) (Penicillium chrysogenum).